The primary structure comprises 860 residues: Receptor-like protein 31 (860 aa).

The signal sequence occupies residues 1–23 (MMIPSQSCFCFFFMVSFFLHTLA). Residues 24–809 (SPTLRHCRHD…SEPEEHVINW (786 aa)) are Extracellular-facing. N49, N64, N88, N95, N112, N117, N154, N178, N202, and N213 each carry an N-linked (GlcNAc...) asparagine glycan. LRR repeat units lie at residues 108 to 131 (QHLH…LGNL), 132 to 155 (FRLT…IGNL), 156 to 179 (SRLT…IGNL), 181 to 202 (QLEY…TFSN), 203 to 226 (LTKL…DMSG), and 227 to 251 (FQNL…LFTI). One copy of the LRR 7; degenerate repeat lies at 252-276 (PSLRWANLEGNMFKGPIEFRNMYSP). LRR repeat units lie at residues 277-301 (STRL…LSQY), 302-325 (LNLI…LFTI), 326-349 (PTLE…NMSS), 350-374 (SSSL…VSQY), 376-398 (NLEE…ISKL), 400-419 (KLEY…PSWL), 420-444 (WRLT…GLDE), 446-468 (QVQW…ICKL), 469-494 (RSLE…SFMV), 496-517 (LTDL…FVNA), 518-541 (TKLL…LIHC), 543-564 (AMQL…WLGS), 565-591 (LPSL…SIGF), and 592-615 (QSLR…YFSS). 3 N-linked (GlcNAc...) asparagine glycosylation sites follow: N313, N346, and N364. The N-linked (GlcNAc...) asparagine glycan is linked to N429. N-linked (GlcNAc...) asparagine glycans are attached at residues N482, N503, and N516. N-linked (GlcNAc...) asparagine glycans are attached at residues N642, N673, and N697. LRR repeat units lie at residues 665–690 (INEE…IGLL), 691–714 (KELR…LANL), 716–738 (KLEA…LGSL), and 740–763 (FMST…QFQG). N-linked (GlcNAc...) asparagine glycosylation is found at N745 and N765. Residues 810–830 (IAAGIAYGPGVVCGLVIGHIF) traverse the membrane as a helical segment. Topologically, residues 831 to 860 (LSHKHECWFMEKFRRKKPKVVTRIARPSKH) are cytoplasmic.

It belongs to the RLP family.

The protein resides in the cell membrane. The chain is Receptor-like protein 31 from Arabidopsis thaliana (Mouse-ear cress).